The chain runs to 351 residues: uncharacterized protein (351 aa).

Zn(2+) is bound by residues His-23, His-25, Lys-151, His-184, His-212, and Asp-270. The residue at position 151 (Lys-151) is an N6-carboxylysine.

It belongs to the metallo-dependent hydrolases superfamily. Phosphotriesterase family. Requires Zn(2+) as cofactor.

This is an uncharacterized protein from Mycoplasma pneumoniae (strain ATCC 29342 / M129 / Subtype 1) (Mycoplasmoides pneumoniae).